Here is a 334-residue protein sequence, read N- to C-terminus: tRNA N6-adenosine threonylcarbamoyltransferase (334 aa).

His-110 and His-114 together coordinate Fe cation. Substrate contacts are provided by residues 133-137 (IVSGG), Asp-166, Gly-179, Asp-183, and Asn-275. Asp-303 is a Fe cation binding site.

This sequence belongs to the KAE1 / TsaD family. Requires Fe(2+) as cofactor.

It localises to the cytoplasm. It carries out the reaction L-threonylcarbamoyladenylate + adenosine(37) in tRNA = N(6)-L-threonylcarbamoyladenosine(37) in tRNA + AMP + H(+). Functionally, required for the formation of a threonylcarbamoyl group on adenosine at position 37 (t(6)A37) in tRNAs that read codons beginning with adenine. Is involved in the transfer of the threonylcarbamoyl moiety of threonylcarbamoyl-AMP (TC-AMP) to the N6 group of A37, together with TsaE and TsaB. TsaD likely plays a direct catalytic role in this reaction. This is tRNA N6-adenosine threonylcarbamoyltransferase from Salinibacter ruber (strain DSM 13855 / M31).